The chain runs to 161 residues: Ribonuclease H (161 aa).

An RNase H type-1 domain is found at 5-149 (EKLAIAAATD…VDAIAVAFSK (145 aa)). Positions 14, 53, 78, and 141 each coordinate Mg(2+).

It belongs to the RNase H family. Monomer. It depends on Mg(2+) as a cofactor.

It localises to the cytoplasm. The catalysed reaction is Endonucleolytic cleavage to 5'-phosphomonoester.. Its function is as follows. Endonuclease that specifically degrades the RNA of RNA-DNA hybrids. This is Ribonuclease H from Prochlorococcus marinus (strain NATL1A).